Consider the following 61-residue polypeptide: Small ribosomal subunit protein uS14 (61 aa).

Zn(2+) is bound by residues Cys-24, Cys-27, Cys-40, and Cys-43.

Belongs to the universal ribosomal protein uS14 family. Zinc-binding uS14 subfamily. As to quaternary structure, part of the 30S ribosomal subunit. Contacts proteins S3 and S10. Requires Zn(2+) as cofactor.

Its function is as follows. Binds 16S rRNA, required for the assembly of 30S particles and may also be responsible for determining the conformation of the 16S rRNA at the A site. The protein is Small ribosomal subunit protein uS14 of Borreliella burgdorferi (strain ATCC 35210 / DSM 4680 / CIP 102532 / B31) (Borrelia burgdorferi).